A 272-amino-acid polypeptide reads, in one-letter code: Alkaline ceramidase (272 aa).

A run of 2 helical transmembrane segments spans residues 34–54 and 61–81; these read FANT…IMLL and VNGG…ASTY. Histidine 83 lines the Zn(2+) pocket. The next 4 membrane-spanning stretches (helical) occupy residues 96 to 116, 124 to 144, 148 to 168, and 183 to 203; these read LSLV…MKWF, LTLV…LCFL, LNAI…NYEG, and ILAL…LCDF. Zn(2+) is bound by residues histidine 213 and histidine 217. The helical transmembrane segment at 214–234 threads the bilayer; sequence ALFHLLAGLAGYTIFIMFSMI. Asparagine 256 is a glycosylation site (N-linked (GlcNAc...) asparagine).

It belongs to the alkaline ceramidase family. It depends on Zn(2+) as a cofactor.

The protein localises to the membrane. The catalysed reaction is an N-acyl-sphingoid base + H2O = a sphingoid base + a fatty acid. It carries out the reaction an N-acylsphing-4-enine + H2O = sphing-4-enine + a fatty acid. It catalyses the reaction an N-acyl-15-methylhexadecasphing-4-enine + H2O = 15-methylhexadecasphing-4-enine + a fatty acid. The protein operates within lipid metabolism; sphingolipid metabolism. In terms of biological role, hydrolyzes the sphingolipid ceramide into sphingoid base and free fatty acid. C.elegans contain specific sphingoid bases, which are unique or different in structure compared to the sphingoid bases found in other animals. Two examples of these distinctive compounds are: 15-methylhexadecasphinganine and 15-methylhexadecasphing-4-enine. In Caenorhabditis elegans, this protein is Alkaline ceramidase.